A 371-amino-acid chain; its full sequence is 4-hydroxy-3-methylbut-2-en-1-yl diphosphate synthase (flavodoxin) (371 aa).

[4Fe-4S] cluster contacts are provided by C270, C273, C305, and E312.

Belongs to the IspG family. The cofactor is [4Fe-4S] cluster.

It carries out the reaction (2E)-4-hydroxy-3-methylbut-2-enyl diphosphate + oxidized [flavodoxin] + H2O + 2 H(+) = 2-C-methyl-D-erythritol 2,4-cyclic diphosphate + reduced [flavodoxin]. The protein operates within isoprenoid biosynthesis; isopentenyl diphosphate biosynthesis via DXP pathway; isopentenyl diphosphate from 1-deoxy-D-xylulose 5-phosphate: step 5/6. In terms of biological role, converts 2C-methyl-D-erythritol 2,4-cyclodiphosphate (ME-2,4cPP) into 1-hydroxy-2-methyl-2-(E)-butenyl 4-diphosphate. The polypeptide is 4-hydroxy-3-methylbut-2-en-1-yl diphosphate synthase (flavodoxin) (Shewanella denitrificans (strain OS217 / ATCC BAA-1090 / DSM 15013)).